We begin with the raw amino-acid sequence, 292 residues long: Proteasome subunit beta (292 aa).

Positions 1–62 are cleaved as a propeptide — removed in mature form; by autocatalysis; sequence MSESLGSVPG…HRAADDIPHG (62 aa). Thr63 (nucleophile) is an active-site residue.

Belongs to the peptidase T1B family. In terms of assembly, the 20S proteasome core is composed of 14 alpha and 14 beta subunits that assemble into four stacked heptameric rings, resulting in a barrel-shaped structure. The two inner rings, each composed of seven catalytic beta subunits, are sandwiched by two outer rings, each composed of seven alpha subunits. The catalytic chamber with the active sites is on the inside of the barrel. Has a gated structure, the ends of the cylinder being occluded by the N-termini of the alpha-subunits. Is capped by the proteasome-associated ATPase, ARC.

It localises to the cytoplasm. It catalyses the reaction Cleavage of peptide bonds with very broad specificity.. It participates in protein degradation; proteasomal Pup-dependent pathway. Its activity is regulated as follows. The formation of the proteasomal ATPase ARC-20S proteasome complex, likely via the docking of the C-termini of ARC into the intersubunit pockets in the alpha-rings, may trigger opening of the gate for substrate entry. Interconversion between the open-gate and close-gate conformations leads to a dynamic regulation of the 20S proteasome proteolysis activity. Component of the proteasome core, a large protease complex with broad specificity involved in protein degradation. The polypeptide is Proteasome subunit beta (Gordonia bronchialis (strain ATCC 25592 / DSM 43247 / BCRC 13721 / JCM 3198 / KCTC 3076 / NBRC 16047 / NCTC 10667) (Rhodococcus bronchialis)).